Consider the following 308-residue polypeptide: Barttin (308 aa).

Over 1-5 (MADEK) the chain is Cytoplasmic. The tract at residues 1–72 (MADEKTFRIG…VPADSDFQGM (72 aa)) is regulates channel membrane trafficking and anion conductance. Residues 6-26 (TFRIGFIVLGLFLLSLGTFLM) form a helical membrane-spanning segment. Residues 27-32 (SHDRPQ) lie on the Extracellular side of the membrane. A helical transmembrane segment spans residues 33–53 (VYGTFYAMGSIMVIGGVLWSM). Residues Cys54 and Cys56 are each lipidated (S-palmitoyl cysteine). The Cytoplasmic portion of the chain corresponds to 54 to 308 (CQCYPKITFV…ELGFEPDVQG (255 aa)). Residues Ser79 and Ser107 each carry the phosphoserine modification. Disordered regions lie at residues 127–149 (PLLA…HSAQ) and 162–308 (LDEK…DVQG). The segment covering 162–171 (LDEKEGEKSR) has biased composition (basic and acidic residues). Polar residues predominate over residues 172–183 (SQSSPPACSQGS). Residues 274 to 283 (EEPEQEEEDL) are compositionally biased toward acidic residues. Ser290 carries the phosphoserine modification.

In terms of assembly, interacts with CLCNK channels. Forms heteromers with CLCNKA in the thin ascending limb of Henle and with CLCNKB in the thick ascending limb and more distal segments. Post-translationally, palmitoylation is necessary for activation of plasma membrane-inserted CLC-K/barttin channels. As to expression, expressed along the distal nephron.

The protein resides in the basolateral cell membrane. In terms of biological role, regulatory subunit of anion-selective CLCNKA:BSND and CLCNKB:BSND heteromeric channels involved in basolateral chloride conductance along the nephron to achieve urine concentration and maintain systemic acid-base homeostasis, and in the stria vascularis of the inner ear to establish the endocochlear potential necessary for normal hearing. Most likely acts as a chaperone that allosterically regulates proper sorting of CLCNKA:BSND and CLCNKB:BSND channels at the basolateral plasma membrane domain and functional switch to ion conducting state. Mediates constitutive opening of channel common gates. This chain is Barttin, found in Rattus norvegicus (Rat).